The primary structure comprises 272 residues: Phosphatidylglycerol--prolipoprotein diacylglyceryl transferase (272 aa).

7 consecutive transmembrane segments (helical) span residues 17–37 (LQVH…WGLA), 55–75 (LVFY…VLFY), 90–110 (VWTG…AMLF), 125–145 (FIAP…FIGG), 174–194 (PSQI…LWWF), 202–222 (MAVS…MEFF), and 230–250 (GFIL…MLLI). An a 1,2-diacyl-sn-glycero-3-phospho-(1'-sn-glycerol)-binding site is contributed by arginine 138.

It belongs to the Lgt family.

It localises to the cell inner membrane. It catalyses the reaction L-cysteinyl-[prolipoprotein] + a 1,2-diacyl-sn-glycero-3-phospho-(1'-sn-glycerol) = an S-1,2-diacyl-sn-glyceryl-L-cysteinyl-[prolipoprotein] + sn-glycerol 1-phosphate + H(+). It functions in the pathway protein modification; lipoprotein biosynthesis (diacylglyceryl transfer). Functionally, catalyzes the transfer of the diacylglyceryl group from phosphatidylglycerol to the sulfhydryl group of the N-terminal cysteine of a prolipoprotein, the first step in the formation of mature lipoproteins. The chain is Phosphatidylglycerol--prolipoprotein diacylglyceryl transferase from Acinetobacter baumannii (strain SDF).